Here is a 265-residue protein sequence, read N- to C-terminus: 4-diphosphocytidyl-2-C-methyl-D-erythritol kinase (265 aa).

Residue lysine 8 is part of the active site. 95-105 provides a ligand contact to ATP; sequence PIGAGLGGGSS. Residue aspartate 135 is part of the active site.

This sequence belongs to the GHMP kinase family. IspE subfamily.

The catalysed reaction is 4-CDP-2-C-methyl-D-erythritol + ATP = 4-CDP-2-C-methyl-D-erythritol 2-phosphate + ADP + H(+). It participates in isoprenoid biosynthesis; isopentenyl diphosphate biosynthesis via DXP pathway; isopentenyl diphosphate from 1-deoxy-D-xylulose 5-phosphate: step 3/6. In terms of biological role, catalyzes the phosphorylation of the position 2 hydroxy group of 4-diphosphocytidyl-2C-methyl-D-erythritol. The chain is 4-diphosphocytidyl-2-C-methyl-D-erythritol kinase from Ureaplasma parvum serovar 3 (strain ATCC 27815 / 27 / NCTC 11736).